The chain runs to 450 residues: Phosphoglucosamine mutase (450 aa).

The Phosphoserine intermediate role is filled by serine 101. Residues serine 101, aspartate 240, aspartate 242, and aspartate 244 each contribute to the Mg(2+) site. Residue serine 101 is modified to Phosphoserine.

The protein belongs to the phosphohexose mutase family. Mg(2+) serves as cofactor. Activated by phosphorylation.

It carries out the reaction alpha-D-glucosamine 1-phosphate = D-glucosamine 6-phosphate. Catalyzes the conversion of glucosamine-6-phosphate to glucosamine-1-phosphate. The chain is Phosphoglucosamine mutase from Streptococcus equi subsp. zooepidemicus (strain H70).